An 896-amino-acid chain; its full sequence is Probable DNA-directed RNA polymerase (896 aa).

Residues Asp-546, Lys-617, and Asp-798 contribute to the active site.

Belongs to the phage and mitochondrial RNA polymerase family.

The protein localises to the mitochondrion. It catalyses the reaction RNA(n) + a ribonucleoside 5'-triphosphate = RNA(n+1) + diphosphate. In terms of biological role, DNA-dependent RNA polymerase catalyzes the transcription of DNA into RNA using the four ribonucleoside triphosphates as substrates. The protein is Probable DNA-directed RNA polymerase of Neurospora crassa.